A 119-amino-acid polypeptide reads, in one-letter code: Large ribosomal subunit protein uL18 (119 aa).

The protein belongs to the universal ribosomal protein uL18 family. Part of the 50S ribosomal subunit; part of the 5S rRNA/L5/L18/L25 subcomplex. Contacts the 5S and 23S rRNAs.

In terms of biological role, this is one of the proteins that bind and probably mediate the attachment of the 5S RNA into the large ribosomal subunit, where it forms part of the central protuberance. The chain is Large ribosomal subunit protein uL18 from Clostridium botulinum (strain Langeland / NCTC 10281 / Type F).